The primary structure comprises 208 residues: Sexual inducer glycoprotein (208 aa).

Positions 1-11 (MAVVVVNSATA) are cleaved as a signal peptide. Residues N89, N119, N131, N139, N146, and N188 are each glycosylated (N-linked (GlcNAc...) asparagine).

In terms of biological role, the sexual inducer is a glycoprotein synthesized and released by sexual males at about the time they release sperm packets. It is one of the most potent biological effector molecules known: it exhibits full effectiveness in converting asexually growing males and females to the sexual pathway at about 10(-7) m. The chain is Sexual inducer glycoprotein from Volvox carteri (Green alga).